The sequence spans 516 residues: uncharacterized protein (516 aa).

A signal peptide spans 1–22 (MLYRFWKTGLAIFMPGCILLSS). Residue Cys-23 is the site of N-palmitoyl cysteine attachment. The S-diacylglycerol cysteine moiety is linked to residue Cys-23.

Belongs to the MG067/MG068/MG395 family.

Its subcellular location is the cell membrane. This is an uncharacterized protein from Mycoplasma genitalium (strain ATCC 33530 / DSM 19775 / NCTC 10195 / G37) (Mycoplasmoides genitalium).